We begin with the raw amino-acid sequence, 264 residues long: Splicing factor U2af 38 kDa subunit (264 aa).

A C3H1-type 1 zinc finger spans residues 12-40 (EKDKVNCSFYFKIGACRHGDRCSRIHNKP). Serine 19 carries the phosphoserine modification. An RRM domain is found at 44–149 (QTVLLQNLYV…RPVYSELSPV (106 aa)). The segment at 151–178 (DFREACCRQYEMGECTRSGFCNFMHLKP) adopts a C3H1-type 2 zinc-finger fold. The span at 190-219 (RRRRARSRSRSPGRRRGSRSRSRSPGRRGG) shows a compositional bias: basic residues. A disordered region spans residues 190 to 264 (RRRRARSRSR…GGGGGGGGRY (75 aa)). A compositionally biased stretch (basic and acidic residues) spans 233-251 (NERDNMRGNDRGNDRDRRK). A compositionally biased stretch (gly residues) spans 253 to 264 (GGGGGGGGGGRY).

It belongs to the splicing factor SR family. As to quaternary structure, associates with a 65 kDa protein.

It is found in the nucleus. Functionally, necessary for the splicing of pre-mRNA. Binds to the polypyrimidine tract of introns early during spliceosome assembly. In Drosophila melanogaster (Fruit fly), this protein is Splicing factor U2af 38 kDa subunit (U2af38).